Reading from the N-terminus, the 403-residue chain is D-mannonate dehydratase CC0532 (403 aa).

Substrate contacts are provided by asparagine 38 and histidine 123. Tyrosine 160 functions as the Proton donor/acceptor in the catalytic mechanism. A Mg(2+)-binding site is contributed by aspartate 211. Residue histidine 213 is the Proton donor/acceptor of the active site. Mg(2+) is bound by residues glutamate 237 and glutamate 263. The substrate site is built by glutamate 263, arginine 284, histidine 313, aspartate 317, and glutamate 340.

It belongs to the mandelate racemase/muconate lactonizing enzyme family. GalD subfamily. Requires Mg(2+) as cofactor.

It carries out the reaction D-mannonate = 2-dehydro-3-deoxy-D-gluconate + H2O. It participates in carbohydrate metabolism; pentose and glucuronate interconversion. Functionally, catalyzes the dehydration of D-mannonate. Has no detectable activity with a panel of 70 other acid sugars (in vitro). In Caulobacter vibrioides (strain ATCC 19089 / CIP 103742 / CB 15) (Caulobacter crescentus), this protein is D-mannonate dehydratase CC0532.